The primary structure comprises 64 residues: Long neurotoxin MS2 (64 aa).

Cystine bridges form between Cys3–Cys24, Cys6–Cys11, Cys17–Cys41, Cys45–Cys57, and Cys58–Cys63.

Belongs to the three-finger toxin family. Ancestral subfamily. In terms of tissue distribution, expressed by the venom gland.

The protein localises to the secreted. Produces peripheral paralysis by blocking neuromuscular transmission at the postsynaptic site. Very weak inhibitor of the endogenous nicotinic acetylcholine receptors (nAChR) in the human rhabdomyosarcoma TE 671 cell line. Not toxic to mice by intraperitoneal injection or to zebrafish by injection at the back of the dorsolateral region. This is Long neurotoxin MS2 from Micrurus surinamensis (Surinam coral snake).